The sequence spans 644 residues: Macrolide export ATP-binding/permease protein MacB (644 aa).

Residues 4-242 (IECKNINRYF…SNVGRIREKA (239 aa)) form the ABC transporter domain. 40–47 (GQSGSGKS) contacts ATP. Transmembrane regions (helical) follow at residues 270–290 (LLTMLGIIIGIASVVSVVALG), 524–544 (IALISLVVGGIGVMNIMLVSV), 574–594 (LICVIGGLVGVGLSAAVSLVF), and 607–627 (AMSVIGAVACSTGIGIAFGFM).

Belongs to the ABC transporter superfamily. Macrolide exporter (TC 3.A.1.122) family. As to quaternary structure, homodimer.

Its subcellular location is the cell inner membrane. Functionally, non-canonical ABC transporter that contains transmembrane domains (TMD), which form a pore in the inner membrane, and an ATP-binding domain (NBD), which is responsible for energy generation. Confers resistance against macrolides. The chain is Macrolide export ATP-binding/permease protein MacB from Neisseria meningitidis serogroup B (strain ATCC BAA-335 / MC58).